Consider the following 908-residue polypeptide: 5'-3' exoribonuclease 2 homolog (908 aa).

The segment at arginine 263–glycine 280 adopts a CCHC-type zinc-finger fold. Disordered stretches follow at residues arginine 409–tyrosine 457 and glycine 821–phenylalanine 908. Residues histidine 432–valine 454 show a composition bias toward polar residues. Residue serine 438 is modified to Phosphoserine. 2 stretches are compositionally biased toward low complexity: residues glycine 825–arginine 868 and glutamine 878–phenylalanine 908.

It belongs to the 5'-3' exonuclease family. XRN2/RAT1 subfamily. Interacts with cuff and Rai1; the interaction with cuff may inhibit its role in RNA degradation.

It localises to the nucleus. A 5'-3' exoribonuclease. May promote the termination of transcription by RNA polymerase II and promote RNA degradation. Involved in turnover of piRNA precursors. The protein is 5'-3' exoribonuclease 2 homolog of Drosophila melanogaster (Fruit fly).